We begin with the raw amino-acid sequence, 472 residues long: Divalent metal cation transporter MntH (472 aa).

11 helical membrane-spanning segments follow: residues Leu59–Trp79, Met92–Ala112, Leu144–Leu164, Val167–Met187, Ala196–Ala216, Val233–Pro253, Leu288–Phe308, Leu325–Ala345, Val377–Gln397, Leu402–Leu422, and Trp439–Leu459.

The protein belongs to the NRAMP family.

It is found in the cell inner membrane. In terms of biological role, h(+)-stimulated, divalent metal cation uptake system. This is Divalent metal cation transporter MntH from Xylella fastidiosa (strain Temecula1 / ATCC 700964).